The chain runs to 133 residues: Ribonuclease P protein component (133 aa).

Belongs to the RnpA family. In terms of assembly, consists of a catalytic RNA component (M1 or rnpB) and a protein subunit.

The enzyme catalyses Endonucleolytic cleavage of RNA, removing 5'-extranucleotides from tRNA precursor.. Functionally, RNaseP catalyzes the removal of the 5'-leader sequence from pre-tRNA to produce the mature 5'-terminus. It can also cleave other RNA substrates such as 4.5S RNA. The protein component plays an auxiliary but essential role in vivo by binding to the 5'-leader sequence and broadening the substrate specificity of the ribozyme. The sequence is that of Ribonuclease P protein component from Bartonella quintana (strain Toulouse) (Rochalimaea quintana).